Here is a 543-residue protein sequence, read N- to C-terminus: Tubby-related protein 1 (543 aa).

The tract at residues 1–290 is disordered; that stretch reads MPLQEETLRE…RASSPPVEVG (290 aa). Composition is skewed to basic and acidic residues over residues 46 to 56 and 86 to 99; these read PETPDSLESKP and FLRD…DPRE. Composition is skewed to acidic residues over residues 110-132 and 244-255; these read GGEE…EEEE and KKEEEEEVEEEV. Over residues 267–276 the composition is skewed to basic residues; that stretch reads GRAKGKGKKK.

This sequence belongs to the TUB family. Homodimer. May interact with ABCF1, PSIP1, ZEB1 and HMGB2 (Potential). Interacts with F-actin. Interacts with DNM1. Interacts with TUB. Interacts with TYRO3. In terms of tissue distribution, retina specific. Detected in the outer plexiform layer in photoreceptor cells (at protein level).

Its subcellular location is the cytoplasm. The protein localises to the cell membrane. It is found in the secreted. It localises to the synapse. Functionally, required for normal development of photoreceptor synapses. Required for normal photoreceptor function and for long-term survival of photoreceptor cells. Interacts with cytoskeleton proteins and may play a role in protein transport in photoreceptor cells. Binds lipids, especially phosphatidylinositol 3-phosphate, phosphatidylinositol 4-phosphate, phosphatidylinositol 5-phosphate, phosphatidylinositol 3,4-bisphosphate, phosphatidylinositol 4,5-bisphosphate, phosphatidylinositol 3,4,5-bisphosphate, phosphatidylserine and phosphatidic acid (in vitro). Contribute to stimulation of phagocytosis of apoptotic retinal pigment epithelium (RPE) cells and macrophages. The chain is Tubby-related protein 1 (Tulp1) from Mus musculus (Mouse).